We begin with the raw amino-acid sequence, 201 residues long: Adenylyl-sulfate kinase (201 aa).

ATP is bound at residue 35–42 (GLSGSGKS). The active-site Phosphoserine intermediate is the S109.

Belongs to the APS kinase family.

The catalysed reaction is adenosine 5'-phosphosulfate + ATP = 3'-phosphoadenylyl sulfate + ADP + H(+). It functions in the pathway sulfur metabolism; hydrogen sulfide biosynthesis; sulfite from sulfate: step 2/3. Functionally, catalyzes the synthesis of activated sulfate. The polypeptide is Adenylyl-sulfate kinase (Salmonella typhi).